We begin with the raw amino-acid sequence, 128 residues long: Small ribosomal subunit protein uS13 (128 aa).

The interval 98–128 is disordered; the sequence is VRGQRTRTNARTRKGPRPRIGVKKKGKQAGS. Basic residues predominate over residues 101–128; it reads QRTRTNARTRKGPRPRIGVKKKGKQAGS.

This sequence belongs to the universal ribosomal protein uS13 family. As to quaternary structure, part of the 30S ribosomal subunit. Forms a loose heterodimer with protein S19. Forms two bridges to the 50S subunit in the 70S ribosome.

In terms of biological role, located at the top of the head of the 30S subunit, it contacts several helices of the 16S rRNA. In the 70S ribosome it contacts the 23S rRNA (bridge B1a) and protein L5 of the 50S subunit (bridge B1b), connecting the 2 subunits; these bridges are implicated in subunit movement. Contacts the tRNAs in the A and P-sites. In Thermomicrobium roseum (strain ATCC 27502 / DSM 5159 / P-2), this protein is Small ribosomal subunit protein uS13.